An 835-amino-acid polypeptide reads, in one-letter code: Microcephalin (835 aa).

In terms of domain architecture, BRCT 1 spans 1-93 (MAAPILKDVV…AHIDESLFPA (93 aa)). The segment at 184–206 (KEKRENLSPTSSQLIQQSHDNPS) is disordered. Polar residues predominate over residues 190-206 (LSPTSSQLIQQSHDNPS). Residues Ser279, Ser287, Ser296, and Ser333 each carry the phosphoserine modification. Phosphothreonine is present on Thr335. The span at 346–361 (HSRPRSSSVKRKRVSH) shows a compositional bias: basic residues. 2 disordered regions span residues 346-376 (HSRP…RKRS) and 418-442 (PDNL…PAQF). Ser548 bears the Phosphoserine mark. The tract at residues 557 to 582 (GLKSTQNRGTTSKISNSSEGEAQSEH) is disordered. The segment covering 559 to 577 (KSTQNRGTTSKISNSSEGE) has biased composition (polar residues). BRCT domains are found at residues 640–730 (SGRG…PFEL) and 751–833 (YRGT…NYLL).

Interacts with CDC27 and maybe other components of the APC/C complex. Interacts with histone variant H2AX under DNA damage conditions.

The protein resides in the cytoplasm. Its subcellular location is the cytoskeleton. The protein localises to the microtubule organizing center. It localises to the centrosome. In terms of biological role, implicated in chromosome condensation and DNA damage induced cellular responses. May play a role in neurogenesis and regulation of the size of the cerebral cortex. In Gorilla gorilla gorilla (Western lowland gorilla), this protein is Microcephalin.